We begin with the raw amino-acid sequence, 134 residues long: Transcription factor atoh7 (134 aa).

The interval 1–27 is disordered; it reads MKPRRPSCADSGSDSDSRDPEKFESAM. A compositionally biased stretch (basic and acidic residues) spans 15-27; the sequence is SDSRDPEKFESAM. The 53-residue stretch at 28-80 folds into the bHLH domain; the sequence is RRRMAANARERKRMQGLNTAFDRLRKVVPQWGQDKKLSKYETLQMALSYIMAL.

The protein localises to the nucleus. The protein resides in the perikaryon. It is found in the cell projection. Its subcellular location is the axon. Transcription factor that binds to DNA at the consensus sequence 5'-CAG[GC]TG-3'. Involved in the differentiation of retinal ganglion cells, photoreceptor population and optic nerve development. Required for retinal circadian rhythm photoentrainment. The polypeptide is Transcription factor atoh7 (Danio rerio (Zebrafish)).